Consider the following 252-residue polypeptide: 3-deoxy-manno-octulosonate cytidylyltransferase (252 aa).

The protein belongs to the KdsB family.

Its subcellular location is the cytoplasm. The enzyme catalyses 3-deoxy-alpha-D-manno-oct-2-ulosonate + CTP = CMP-3-deoxy-beta-D-manno-octulosonate + diphosphate. The protein operates within nucleotide-sugar biosynthesis; CMP-3-deoxy-D-manno-octulosonate biosynthesis; CMP-3-deoxy-D-manno-octulosonate from 3-deoxy-D-manno-octulosonate and CTP: step 1/1. It participates in bacterial outer membrane biogenesis; lipopolysaccharide biosynthesis. Its function is as follows. Activates KDO (a required 8-carbon sugar) for incorporation into bacterial lipopolysaccharide in Gram-negative bacteria. The polypeptide is 3-deoxy-manno-octulosonate cytidylyltransferase (Nitratidesulfovibrio vulgaris (strain DP4) (Desulfovibrio vulgaris)).